Consider the following 636-residue polypeptide: Threonine--tRNA ligase (636 aa).

Positions 1-63 constitute a TGS domain; it reads MPMITITLPD…EHDASLRIIT (63 aa). Residues 245–536 are catalytic; sequence DHRKIGKAQD…LIEHHAGAFP (292 aa). Zn(2+) contacts are provided by Cys336, His387, and His513.

It belongs to the class-II aminoacyl-tRNA synthetase family. Homodimer. Zn(2+) is required as a cofactor.

The protein resides in the cytoplasm. It catalyses the reaction tRNA(Thr) + L-threonine + ATP = L-threonyl-tRNA(Thr) + AMP + diphosphate + H(+). Its function is as follows. Catalyzes the attachment of threonine to tRNA(Thr) in a two-step reaction: L-threonine is first activated by ATP to form Thr-AMP and then transferred to the acceptor end of tRNA(Thr). Also edits incorrectly charged L-seryl-tRNA(Thr). In Xanthomonas campestris pv. campestris (strain 8004), this protein is Threonine--tRNA ligase.